The primary structure comprises 207 residues: Thiamine-phosphate synthase (207 aa).

4-amino-2-methyl-5-(diphosphooxymethyl)pyrimidine-binding positions include 35–39 and N67; that span reads QYRDK. The Mg(2+) site is built by D68 and D86. T105 contributes to the 4-amino-2-methyl-5-(diphosphooxymethyl)pyrimidine binding site. 132 to 134 provides a ligand contact to 2-[(2R,5Z)-2-carboxy-4-methylthiazol-5(2H)-ylidene]ethyl phosphate; that stretch reads SNT. Residue K135 coordinates 4-amino-2-methyl-5-(diphosphooxymethyl)pyrimidine. 2-[(2R,5Z)-2-carboxy-4-methylthiazol-5(2H)-ylidene]ethyl phosphate is bound at residue G162.

This sequence belongs to the thiamine-phosphate synthase family. The cofactor is Mg(2+).

It carries out the reaction 2-[(2R,5Z)-2-carboxy-4-methylthiazol-5(2H)-ylidene]ethyl phosphate + 4-amino-2-methyl-5-(diphosphooxymethyl)pyrimidine + 2 H(+) = thiamine phosphate + CO2 + diphosphate. It catalyses the reaction 2-(2-carboxy-4-methylthiazol-5-yl)ethyl phosphate + 4-amino-2-methyl-5-(diphosphooxymethyl)pyrimidine + 2 H(+) = thiamine phosphate + CO2 + diphosphate. The enzyme catalyses 4-methyl-5-(2-phosphooxyethyl)-thiazole + 4-amino-2-methyl-5-(diphosphooxymethyl)pyrimidine + H(+) = thiamine phosphate + diphosphate. It functions in the pathway cofactor biosynthesis; thiamine diphosphate biosynthesis; thiamine phosphate from 4-amino-2-methyl-5-diphosphomethylpyrimidine and 4-methyl-5-(2-phosphoethyl)-thiazole: step 1/1. In terms of biological role, condenses 4-methyl-5-(beta-hydroxyethyl)thiazole monophosphate (THZ-P) and 2-methyl-4-amino-5-hydroxymethyl pyrimidine pyrophosphate (HMP-PP) to form thiamine monophosphate (TMP). The chain is Thiamine-phosphate synthase from Pseudomonas fluorescens (strain Pf0-1).